Consider the following 504-residue polypeptide: L-arabinose isomerase (504 aa).

Mn(2+) contacts are provided by E308, E335, H352, and H452.

Belongs to the arabinose isomerase family. Mn(2+) is required as a cofactor.

It carries out the reaction beta-L-arabinopyranose = L-ribulose. It functions in the pathway carbohydrate degradation; L-arabinose degradation via L-ribulose; D-xylulose 5-phosphate from L-arabinose (bacterial route): step 1/3. In terms of biological role, catalyzes the conversion of L-arabinose to L-ribulose. The sequence is that of L-arabinose isomerase from Bifidobacterium adolescentis (strain ATCC 15703 / DSM 20083 / NCTC 11814 / E194a).